A 688-amino-acid chain; its full sequence is ATP-dependent zinc metalloprotease FTSH 6, chloroplastic (688 aa).

A chloroplast-targeting transit peptide spans 1–75; sequence MKMASSSSAL…GFTSALGTVL (75 aa). The span at 25–36 shows a compositional bias: polar residues; that stretch reads QQFQKPASLSKS. Positions 25–44 are disordered; sequence QQFQKPASLSKSSHTHKPSL. The transit peptide at 76-83 directs the protein to the thylakoid; it reads AHPAKAEP. Residues 84 to 168 lie on the Lumenal, thylakoid side of the membrane; that stretch reads EAPIEATSNR…AHPMNVNWGA (85 aa). Residues 169–189 form a helical membrane-spanning segment; that stretch reads FLLNFLGNLGFPLILLVSLLL. The Stromal portion of the chain corresponds to 190–688; it reads TSSSRRNPAG…RIRINDLISV (499 aa). 264–271 is an ATP binding site; the sequence is GPPGTGKT. Residue His-485 participates in Zn(2+) binding. Glu-486 is an active-site residue. 2 residues coordinate Zn(2+): His-489 and Asp-563.

It in the N-terminal section; belongs to the AAA ATPase family. In the C-terminal section; belongs to the peptidase M41 family. Zn(2+) serves as cofactor.

It localises to the plastid. The protein resides in the chloroplast thylakoid membrane. Functionally, probable ATP-dependent zinc metallopeptidase. Involved in the degradation of the light-harvesting complex of photosystem II (LHC II) during senescence or high light acclimation. This chain is ATP-dependent zinc metalloprotease FTSH 6, chloroplastic (FTSH6), found in Arabidopsis thaliana (Mouse-ear cress).